Here is a 417-residue protein sequence, read N- to C-terminus: Tyrosine--tRNA ligase (417 aa).

Residue Y39 coordinates L-tyrosine. A 'HIGH' region motif is present at residues 44 to 53 (PTAPSLHAGG). Y176 and Q180 together coordinate L-tyrosine. A 'KMSKS' region motif is present at residues 236–240 (KMGKS). K239 lines the ATP pocket. An S4 RNA-binding domain is found at 350–417 (IGVLALMVLA…KKRHVLIRPA (68 aa)).

Belongs to the class-I aminoacyl-tRNA synthetase family. TyrS type 1 subfamily. Homodimer.

The protein localises to the cytoplasm. It catalyses the reaction tRNA(Tyr) + L-tyrosine + ATP = L-tyrosyl-tRNA(Tyr) + AMP + diphosphate + H(+). In terms of biological role, catalyzes the attachment of tyrosine to tRNA(Tyr) in a two-step reaction: tyrosine is first activated by ATP to form Tyr-AMP and then transferred to the acceptor end of tRNA(Tyr). The protein is Tyrosine--tRNA ligase of Brucella suis biovar 1 (strain 1330).